The chain runs to 690 residues: eEF1A lysine and N-terminal methyltransferase (690 aa).

The disordered stretch occupies residues 427 to 451 (AAASSASKKKNKKKAKQPASTGAKD). Residues 433–442 (SKKKNKKKAK) show a composition bias toward basic residues.

Belongs to the methyltransferase superfamily.

It catalyses the reaction L-lysyl-[protein] + S-adenosyl-L-methionine = N(6)-methyl-L-lysyl-[protein] + S-adenosyl-L-homocysteine + H(+). The catalysed reaction is N(6)-methyl-L-lysyl-[protein] + S-adenosyl-L-methionine = N(6),N(6)-dimethyl-L-lysyl-[protein] + S-adenosyl-L-homocysteine + H(+). It carries out the reaction N-terminal glycyl-L-lysyl-L-glutamyl-[protein] + 3 S-adenosyl-L-methionine = N-terminal N,N,N-trimethyl-glycyl-L-lysyl-L-glutamyl-[protein] + 3 S-adenosyl-L-homocysteine + 3 H(+). Functionally, dual methyltransferase that catalyzes methylation of elongation factor 1-alpha (eef1a1 and eef1a2) at two different positions, and is therefore involved in the regulation of mRNA translation. Via its C-terminus, methylates the N-terminus of eef1a1 and eef1a2. Via its N-terminus dimethylates lysine residues of eef1a1 and eef1a2. This Danio rerio (Zebrafish) protein is eEF1A lysine and N-terminal methyltransferase (mettl13).